A 1110-amino-acid chain; its full sequence is Brother of CDO (1110 aa).

Positions 1–25 (MTTCRRERPILTLLWILMATAGCLA) are cleaved as a signal peptide. The Extracellular portion of the chain corresponds to 26–850 (DLNEVPQVTV…MVARASDLPY (825 aa)). Ig-like C2-type domains are found at residues 31 to 118 (PQVT…ATVT), 124 to 208 (DFKL…VKTS), 229 to 310 (PLEA…VILY), and 318 to 402 (PEVT…VQLR). 4 disulfide bridges follow: cysteine 52/cysteine 101, cysteine 145/cysteine 195, cysteine 247/cysteine 294, and cysteine 339/cysteine 386. N-linked (GlcNAc...) asparagine glycosylation is found at asparagine 60, asparagine 71, asparagine 93, asparagine 184, and asparagine 270. A disordered region spans residues 407–458 (DTTLRPGRDTKPIAATPPMPPSRPSRPDQMLREQPGLVKPPTSSVQPTSLKC). Positions 421-430 (ATPPMPPSRP) are enriched in pro residues. Fibronectin type-III domains lie at 469–566 (APII…GRRP), 603–698 (APDR…VVSG), and 707–807 (PVAG…TKAR). An N-linked (GlcNAc...) asparagine glycan is attached at asparagine 512. The disordered stretch occupies residues 561 to 610 (RTGRRPKPEIVASKEQQIQRDDPGASLQSSSQPDHGRLSPPEAPDRPTIS). Asparagine 720 and asparagine 754 each carry an N-linked (GlcNAc...) asparagine glycan. The interval 809 to 828 (FSGQPGRPPPLTLAPPQPPP) is disordered. The segment covering 814-828 (GRPPPLTLAPPQPPP) has biased composition (pro residues). The helical transmembrane segment at 851-871 (LIVGVVLGSIVLIIVTFIPFC) threads the bilayer. Over 872-1110 (LWRAWSKQKH…VSFETPPPTI (239 aa)) the chain is Cytoplasmic. Positions 1065–1110 (SDSCQVGGGDWSSQHPSGTYTGQERGMRFSPSPSVHVSFETPPPTI) are disordered. Over residues 1075-1086 (WSSQHPSGTYTG) the composition is skewed to polar residues.

As to quaternary structure, part of a complex that contains BOC, CDON, NEO1, cadherins and CTNNB1. Interacts with SHH, DHH and IHH. Interacts with NTN3. Interacts with CDH2 and CTNNB1. Interacts with CDH15 only during the early stages of myoblast differentiation. As to expression, highly expressed in embryonic somites, limb buds, dermomyotomes and in the neural tube.

It localises to the membrane. Functionally, component of a cell-surface receptor complex that mediates cell-cell interactions between muscle precursor cells. Promotes differentiation of myogenic cells. The protein is Brother of CDO (Boc) of Mus musculus (Mouse).